Reading from the N-terminus, the 156-residue chain is Lipoprotein signal peptidase (156 aa).

3 helical membrane-spanning segments follow: residues 5–25 (FKFI…DQWV), 64–84 (YLHL…KTLL), and 89–109 (IAFG…FIHG). Residues Asp-113 and Asp-130 contribute to the active site. The chain crosses the membrane as a helical span at residues 122 to 142 (NFAIFNVADVMINISVALILI).

The protein belongs to the peptidase A8 family.

The protein localises to the cell inner membrane. The catalysed reaction is Release of signal peptides from bacterial membrane prolipoproteins. Hydrolyzes -Xaa-Yaa-Zaa-|-(S,diacylglyceryl)Cys-, in which Xaa is hydrophobic (preferably Leu), and Yaa (Ala or Ser) and Zaa (Gly or Ala) have small, neutral side chains.. It functions in the pathway protein modification; lipoprotein biosynthesis (signal peptide cleavage). This protein specifically catalyzes the removal of signal peptides from prolipoproteins. This is Lipoprotein signal peptidase from Campylobacter jejuni subsp. jejuni serotype O:23/36 (strain 81-176).